The primary structure comprises 262 residues: Zinc finger protein ehn-3 (262 aa).

4 C2H2-type zinc fingers span residues 2-24 (EKCDICHQKFSNKTNLNRHKVMH), 30-52 (FECQFCRRPFFRNDRMKEHMMTH), 59-84 (FECPITACNSKFNSFTSLQFHVDSEH), and 92-115 (AKCKSCIKWFNSSHRLLLHFHTAH). Residues 179-204 (SVKSAKELSPTPSTEIETPEEEELDG) are disordered. Positions 185-194 (ELSPTPSTEI) are enriched in low complexity. Positions 195-204 (ETPEEEELDG) are enriched in acidic residues. 2 consecutive C2H2-type zinc fingers follow at residues 208 to 230 (WYCDYCKIRFDDKVMWYLHSGLH) and 236 to 260 (FKCSLCGSLCDGKYDFAAHLVYANH).

It belongs to the krueppel C2H2-type zinc-finger protein family.

The protein resides in the nucleus. In terms of biological role, together with the zinc finger protein ztf-16, plays a role in gonadogenesis, specifically in somatic gonad precursor cell development. This is possibly by regulating tra-1 gene expression. Its function is as follows. Required for proper gonadal primordium assembly and somatic gonad precursor cell morphology. The protein is Zinc finger protein ehn-3 of Caenorhabditis elegans.